A 199-amino-acid chain; its full sequence is NADH-ubiquinone oxidoreductase chain 6 (199 aa).

The next 5 membrane-spanning stretches (helical) occupy residues 1-21, 27-47, 49-69, 87-107, and 150-170; these read MILFYVFVVLALVSGAMVIRA, SVLFLILVFCNTSGLLVLLGL, FFAMIFLVVYVGAIAVLFLFV, YLPVGGIIGLIFLLEIFLMVD, and FFLFLVSSLILLVALIGAIVL.

This sequence belongs to the complex I subunit 6 family.

The protein resides in the mitochondrion membrane. The enzyme catalyses a ubiquinone + NADH + 5 H(+)(in) = a ubiquinol + NAD(+) + 4 H(+)(out). Functionally, core subunit of the mitochondrial membrane respiratory chain NADH dehydrogenase (Complex I) that is believed to belong to the minimal assembly required for catalysis. Complex I functions in the transfer of electrons from NADH to the respiratory chain. The immediate electron acceptor for the enzyme is believed to be ubiquinone. The protein is NADH-ubiquinone oxidoreductase chain 6 (ND6) of Marchantia polymorpha (Common liverwort).